The primary structure comprises 301 residues: Protoheme IX farnesyltransferase (301 aa).

Helical transmembrane passes span 16 to 36 (VVALIVFTALVGMFLAIPGIP), 41 to 61 (IQSGALGFLGIWLAAAAAAAI), 93 to 113 (VFAGVLITLSMTILTLGVNLI), 114 to 134 (TAVLTFTSLIGYAVIYTVYLK), 141 to 161 (IVIGGLAGAMPPMLGWAAVTG), 172 to 192 (SLLVAIIFVWTPPHFWALAIF), 217 to 237 (QILLYTVILSVVTLLPVATGM), 238 to 258 (SGVFYLGAALVLDAVFLWYAW), and 273 to 293 (FGYSIVYLMALFAFLMFDHWL).

The protein belongs to the UbiA prenyltransferase family. Protoheme IX farnesyltransferase subfamily.

Its subcellular location is the cell inner membrane. It catalyses the reaction heme b + (2E,6E)-farnesyl diphosphate + H2O = Fe(II)-heme o + diphosphate. It participates in porphyrin-containing compound metabolism; heme O biosynthesis; heme O from protoheme: step 1/1. Converts heme B (protoheme IX) to heme O by substitution of the vinyl group on carbon 2 of heme B porphyrin ring with a hydroxyethyl farnesyl side group. This Xylella fastidiosa (strain 9a5c) protein is Protoheme IX farnesyltransferase.